A 56-amino-acid chain; its full sequence is Small ribosomal subunit protein eS31 (56 aa).

4 residues coordinate Zn(2+): Cys28, Cys31, Cys46, and Cys49. The segment at 28-49 (CPRCGPGVFMANHKDRWSCGRC) adopts a C4-type zinc-finger fold.

This sequence belongs to the eukaryotic ribosomal protein eS31 family. As to quaternary structure, part of the 30S ribosomal subunit. The cofactor is Zn(2+).

The sequence is that of Small ribosomal subunit protein eS31 from Thermococcus gammatolerans (strain DSM 15229 / JCM 11827 / EJ3).